A 161-amino-acid chain; its full sequence is Anaerobic nitrite reductase Glb1-1 (161 aa).

One can recognise a Globin domain in the interval 8–157; that stretch reads CFTEEQEALV…LVGAIKSEMK (150 aa). Positions 41–45 match the Homodimerization motif; it reads EIAPS. Heme b contacts are provided by Ser51, Lys65, His69, Lys99, Thr103, and His104. The short motif at 111–123 is the Homodimerization element; sequence NEHFEVTKFALLD.

It belongs to the plant globin family. In terms of assembly, homodimer. It depends on heme b as a cofactor. As to expression, mainly expressed in root nodules, and, to a lower extent, in leaves, roots, stems, flowers and fruits. Accumulates in mature root nodules.

It carries out the reaction Fe(III)-heme b-[protein] + nitric oxide + H2O = Fe(II)-heme b-[protein] + nitrite + 2 H(+). Functionally, phytoglobin that reduces nitrite to nitric oxide (NO) under anoxic conditions (e.g. during flooding or in waterlogged soil) and upon root nodulation. Required for general plant development and during nodulation, especially for the onset of symbiosis. Monitors nitric oxide (NO) levels during early phase of the nitrogen-fixing symbiosis and buffers oxygen in functioning nodules. May not function as an oxygen storage or transport protein. Has an unusually high affinity for O(2) through a hexacoordinate heme iron because of a very low dissociation constant. The sequence is that of Anaerobic nitrite reductase Glb1-1 from Lotus japonicus (Lotus corniculatus var. japonicus).